Reading from the N-terminus, the 610-residue chain is Autophagy-related protein 22-1 (610 aa).

The disordered stretch occupies residues 1–29 (MIFTSTPPAPPPADAQQRQPRYPGEDTTP). A helical transmembrane segment spans residues 41-61 (YGIAAEVFAVCGVGSFLPLTL). N-linked (GlcNAc...) asparagine glycosylation occurs at asparagine 90. 3 helical membrane passes run 120-140 (SFAM…LISF), 153-173 (LLLT…FISP), and 177-197 (ILGA…FVVL). Residues 216–242 (KTEGEELPHLDSSGEYTRSGSFNRGDN) form a disordered region. Positions 229-239 (GEYTRSGSFNR) are enriched in polar residues. Transmembrane regions (helical) follow at residues 277 to 297 (GVGL…LLLF), 310 to 330 (TLPL…FTVV), 379 to 399 (VVIF…VSGT), and 415 to 435 (VGLL…LWPV). N-linked (GlcNAc...) asparagine glycosylation is present at asparagine 445. 4 helical membrane-spanning segments follow: residues 450-470 (LCIA…IPLV), 485-507 (FPLG…SFFG), 527-547 (KGSS…TGQV), and 550-570 (GFFF…MVNA). A disordered region spans residues 586 to 610 (KSHGENSSEFGHPSEEAEGLLARNP). N-linked (GlcNAc...) asparagine glycosylation is present at asparagine 591.

Belongs to the ATG22 family.

It localises to the vacuole membrane. Its function is as follows. Vacuolar effluxer which mediate the efflux of amino acids resulting from autophagic degradation. The release of autophagic amino acids allows the maintenance of protein synthesis and viability during nitrogen starvation. In Aspergillus clavatus (strain ATCC 1007 / CBS 513.65 / DSM 816 / NCTC 3887 / NRRL 1 / QM 1276 / 107), this protein is Autophagy-related protein 22-1 (atg22-1).